The sequence spans 692 residues: Vacuolar amino acid transporter 3 (692 aa).

Positions 1-14 (MNGKEVSSGSGRTQ) are enriched in polar residues. The disordered stretch occupies residues 1 to 71 (MNGKEVSSGS…TGGLLKKPPL (71 aa)). Low complexity predominate over residues 15 to 24 (SNNNKKNNNG). Over residues 28 to 38 (GISHASGSPLT) the composition is skewed to polar residues. A phosphoserine mark is found at Ser-59, Ser-119, and Ser-121. 2 disordered regions span residues 135–170 (KWTN…SNRK) and 258–294 (DLSE…GRHP). Residues 141 to 153 (PSSPSQYQYPSQP) show a composition bias toward low complexity. Polar residues predominate over residues 154-167 (ALSTSIPSQAPSFS). A Phosphoserine modification is found at Ser-165. Over residues 258–279 (DLSEEEEEEEETEEEPEEEALE) the composition is skewed to acidic residues. The next 11 helical transmembrane spans lie at 302-322 (AVLL…PKAF), 329-349 (FSAL…VSLI), 374-394 (FAIL…YTVF), 412-432 (GSIS…PLSL), 443-463 (ALIA…YSIY), 483-503 (WSLF…LIPI), 519-539 (AVMC…YAAF), 561-581 (VQLL…FPAI), 607-627 (YFRC…ANDL), 630-650 (FVSL…PPLL), and 665-685 (LLLD…TSWQ).

It belongs to the amino acid/polyamine transporter 2 family.

Its subcellular location is the vacuole membrane. In terms of biological role, involved in amino acid efflux from the vacuole to the cytoplasm. Capable of transporting large neutral amino acids including tyrosine, glutamine, asparagine, isoleucine and leucine. This Saccharomyces cerevisiae (strain ATCC 204508 / S288c) (Baker's yeast) protein is Vacuolar amino acid transporter 3 (AVT3).